We begin with the raw amino-acid sequence, 72 residues long: uncharacterized protein (72 aa).

This sequence belongs to the asfivirus I73R family.

The protein localises to the virion. This is an uncharacterized protein from Ornithodoros (relapsing fever ticks).